A 261-amino-acid polypeptide reads, in one-letter code: Putative hydro-lyase Nther_1142 (261 aa).

This sequence belongs to the D-glutamate cyclase family.

The protein is Putative hydro-lyase Nther_1142 of Natranaerobius thermophilus (strain ATCC BAA-1301 / DSM 18059 / JW/NM-WN-LF).